The primary structure comprises 269 residues: Troponin T, fast skeletal muscle (269 aa).

Positions 1 to 23 (MSDEEVEQVEEQYEEEEEAQEEA) are enriched in acidic residues. Residues 1 to 72 (MSDEEVEQVE…EKVDFDDIQK (72 aa)) form a disordered region. Ser2 bears the N-acetylserine mark. Ser2 carries the post-translational modification Phosphoserine. Basic and acidic residues predominate over residues 24 to 34 (AEVHEEVHEPE). The segment covering 35 to 47 (EVQEDTAEEDAEE) has biased composition (acidic residues). Basic and acidic residues predominate over residues 60-72 (PEGEKVDFDDIQK). The residue at position 88 (Ser88) is a Phosphoserine. A compositionally biased stretch (basic and acidic residues) spans 111 to 153 (RAERAEQQRIRAEKERERQNRLAEEKARREEEDAKRRAEDDLK). A disordered region spans residues 111 to 158 (RAERAEQQRIRAEKERERQNRLAEEKARREEEDAKRRAEDDLKKKKAL). A phosphoserine mark is found at Ser159, Ser166, and Ser167. The interval 245-269 (RIDQAQKHSKKAGTPAKGKVGGRWK) is disordered.

It belongs to the troponin T family. In terms of tissue distribution, in fetal and adult fast skeletal muscles, with a higher level expression in fetal than in adult muscle.

Its function is as follows. Troponin T is the tropomyosin-binding subunit of troponin, the thin filament regulatory complex which confers calcium-sensitivity to striated muscle actomyosin ATPase activity. This Homo sapiens (Human) protein is Troponin T, fast skeletal muscle (TNNT3).